The primary structure comprises 435 residues: NADH-quinone oxidoreductase subunit D (435 aa).

Belongs to the complex I 49 kDa subunit family. NDH-1 is composed of 14 different subunits. Subunits NuoB, C, D, E, F, and G constitute the peripheral sector of the complex.

Its subcellular location is the cell inner membrane. It carries out the reaction a quinone + NADH + 5 H(+)(in) = a quinol + NAD(+) + 4 H(+)(out). Its function is as follows. NDH-1 shuttles electrons from NADH, via FMN and iron-sulfur (Fe-S) centers, to quinones in the respiratory chain. The immediate electron acceptor for the enzyme in this species is believed to be ubiquinone. Couples the redox reaction to proton translocation (for every two electrons transferred, four hydrogen ions are translocated across the cytoplasmic membrane), and thus conserves the redox energy in a proton gradient. The sequence is that of NADH-quinone oxidoreductase subunit D from Xanthomonas oryzae pv. oryzae (strain MAFF 311018).